The primary structure comprises 325 residues: Thiamine-monophosphate kinase (325 aa).

Residues D30, S45, T46, and D47 each contribute to the Mg(2+) site. H54 is a binding site for substrate. Mg(2+)-binding residues include D75 and D122. ATP contacts are provided by residues 121–122 (GD) and R146. Position 212 (D212) interacts with Mg(2+). Residue S214 coordinates ATP. A Mg(2+)-binding site is contributed by D215. 2 residues coordinate substrate: E263 and Y319.

The protein belongs to the thiamine-monophosphate kinase family.

It carries out the reaction thiamine phosphate + ATP = thiamine diphosphate + ADP. It functions in the pathway cofactor biosynthesis; thiamine diphosphate biosynthesis; thiamine diphosphate from thiamine phosphate: step 1/1. In terms of biological role, catalyzes the ATP-dependent phosphorylation of thiamine-monophosphate (TMP) to form thiamine-pyrophosphate (TPP), the active form of vitamin B1. The chain is Thiamine-monophosphate kinase (thiL) from Salmonella typhimurium (strain LT2 / SGSC1412 / ATCC 700720).